Consider the following 191-residue polypeptide: Peptidyl-tRNA hydrolase (191 aa).

Tyr-15 contacts tRNA. His-20 functions as the Proton acceptor in the catalytic mechanism. TRNA is bound by residues Phe-66, Asn-68, and Asn-114.

It belongs to the PTH family. As to quaternary structure, monomer.

It localises to the cytoplasm. The catalysed reaction is an N-acyl-L-alpha-aminoacyl-tRNA + H2O = an N-acyl-L-amino acid + a tRNA + H(+). Its function is as follows. Hydrolyzes ribosome-free peptidyl-tRNAs (with 1 or more amino acids incorporated), which drop off the ribosome during protein synthesis, or as a result of ribosome stalling. Functionally, catalyzes the release of premature peptidyl moieties from peptidyl-tRNA molecules trapped in stalled 50S ribosomal subunits, and thus maintains levels of free tRNAs and 50S ribosomes. The protein is Peptidyl-tRNA hydrolase of Streptococcus agalactiae serotype III (strain NEM316).